A 465-amino-acid polypeptide reads, in one-letter code: Transposase for insertion sequence IS1202 (465 aa).

One can recognise an Integrase catalytic domain in the interval 157–340 (HPSRPRKKFA…APNPSERNLI (184 aa)).

Required for the transposition of the insertion element. The sequence is that of Transposase for insertion sequence IS1202 from Streptococcus pneumoniae.